We begin with the raw amino-acid sequence, 433 residues long: Trigger factor (433 aa).

The 86-residue stretch at 161 to 246 (GDRVTMDFVG…AKKVEARDLP (86 aa)) folds into the PPIase FKBP-type domain.

The protein belongs to the FKBP-type PPIase family. Tig subfamily.

The protein resides in the cytoplasm. It carries out the reaction [protein]-peptidylproline (omega=180) = [protein]-peptidylproline (omega=0). In terms of biological role, involved in protein export. Acts as a chaperone by maintaining the newly synthesized protein in an open conformation. Functions as a peptidyl-prolyl cis-trans isomerase. This is Trigger factor from Idiomarina loihiensis (strain ATCC BAA-735 / DSM 15497 / L2-TR).